The primary structure comprises 93 residues: CRISPR-associated endoribonuclease Cas2 3 (93 aa).

Asp-10 contributes to the Mg(2+) binding site.

This sequence belongs to the CRISPR-associated endoribonuclease Cas2 protein family. As to quaternary structure, homodimer, forms a heterotetramer with a Cas1 homodimer. Mg(2+) is required as a cofactor.

Its function is as follows. CRISPR (clustered regularly interspaced short palindromic repeat), is an adaptive immune system that provides protection against mobile genetic elements (viruses, transposable elements and conjugative plasmids). CRISPR clusters contain sequences complementary to antecedent mobile elements and target invading nucleic acids. CRISPR clusters are transcribed and processed into CRISPR RNA (crRNA). Functions as a ssRNA-specific endoribonuclease. Involved in the integration of spacer DNA into the CRISPR cassette. The polypeptide is CRISPR-associated endoribonuclease Cas2 3 (Chloroflexus aurantiacus (strain ATCC 29366 / DSM 635 / J-10-fl)).